The primary structure comprises 380 residues: Erythronate-4-phosphate dehydrogenase (380 aa).

Substrate is bound by residues Ser45 and Thr66. NAD(+)-binding positions include 126 to 127 (QV), Asp146, Thr174, 205 to 207 (ASR), and Asp231. Arg207 is a catalytic residue. Glu236 is an active-site residue. His253 acts as the Proton donor in catalysis. Gly256 is an NAD(+) binding site. Residue Tyr257 participates in substrate binding.

The protein belongs to the D-isomer specific 2-hydroxyacid dehydrogenase family. PdxB subfamily. As to quaternary structure, homodimer.

The protein localises to the cytoplasm. It carries out the reaction 4-phospho-D-erythronate + NAD(+) = (R)-3-hydroxy-2-oxo-4-phosphooxybutanoate + NADH + H(+). Its pathway is cofactor biosynthesis; pyridoxine 5'-phosphate biosynthesis; pyridoxine 5'-phosphate from D-erythrose 4-phosphate: step 2/5. Functionally, catalyzes the oxidation of erythronate-4-phosphate to 3-hydroxy-2-oxo-4-phosphonooxybutanoate. This Azotobacter vinelandii (strain DJ / ATCC BAA-1303) protein is Erythronate-4-phosphate dehydrogenase.